Here is a 311-residue protein sequence, read N- to C-terminus: tRNA N6-adenosine threonylcarbamoyltransferase (311 aa).

Fe cation is bound by residues H108 and H112. Residues 130–134 (LVSGG), D163, G176, D180, and N270 each bind substrate. Position 294 (D294) interacts with Fe cation.

Belongs to the KAE1 / TsaD family. It depends on Fe(2+) as a cofactor.

The protein resides in the cytoplasm. The enzyme catalyses L-threonylcarbamoyladenylate + adenosine(37) in tRNA = N(6)-L-threonylcarbamoyladenosine(37) in tRNA + AMP + H(+). In terms of biological role, required for the formation of a threonylcarbamoyl group on adenosine at position 37 (t(6)A37) in tRNAs that read codons beginning with adenine. Is involved in the transfer of the threonylcarbamoyl moiety of threonylcarbamoyl-AMP (TC-AMP) to the N6 group of A37, together with TsaE and TsaB. TsaD likely plays a direct catalytic role in this reaction. The chain is tRNA N6-adenosine threonylcarbamoyltransferase from Metamycoplasma arthritidis (strain 158L3-1) (Mycoplasma arthritidis).